The sequence spans 264 residues: Thymidylate synthase (264 aa).

Residue Arg21 participates in dUMP binding. Position 51 (His51) interacts with (6R)-5,10-methylene-5,6,7,8-tetrahydrofolate. 126-127 (RR) lines the dUMP pocket. The Nucleophile role is filled by Cys146. Residues 166-169 (RSCD), Asn177, and 207-209 (HLY) contribute to the dUMP site. Position 169 (Asp169) interacts with (6R)-5,10-methylene-5,6,7,8-tetrahydrofolate. Residue Ala263 participates in (6R)-5,10-methylene-5,6,7,8-tetrahydrofolate binding.

Belongs to the thymidylate synthase family. Bacterial-type ThyA subfamily. In terms of assembly, homodimer.

Its subcellular location is the cytoplasm. The enzyme catalyses dUMP + (6R)-5,10-methylene-5,6,7,8-tetrahydrofolate = 7,8-dihydrofolate + dTMP. The protein operates within pyrimidine metabolism; dTTP biosynthesis. Functionally, catalyzes the reductive methylation of 2'-deoxyuridine-5'-monophosphate (dUMP) to 2'-deoxythymidine-5'-monophosphate (dTMP) while utilizing 5,10-methylenetetrahydrofolate (mTHF) as the methyl donor and reductant in the reaction, yielding dihydrofolate (DHF) as a by-product. This enzymatic reaction provides an intracellular de novo source of dTMP, an essential precursor for DNA biosynthesis. In Aeromonas hydrophila subsp. hydrophila (strain ATCC 7966 / DSM 30187 / BCRC 13018 / CCUG 14551 / JCM 1027 / KCTC 2358 / NCIMB 9240 / NCTC 8049), this protein is Thymidylate synthase.